The chain runs to 502 residues: ATP synthase subunit alpha (502 aa).

Position 169-176 (169-176 (GDRQTGKT)) interacts with ATP.

Belongs to the ATPase alpha/beta chains family. In terms of assembly, F-type ATPases have 2 components, CF(1) - the catalytic core - and CF(0) - the membrane proton channel. CF(1) has five subunits: alpha(3), beta(3), gamma(1), delta(1), epsilon(1). CF(0) has three main subunits: a(1), b(2) and c(9-12). The alpha and beta chains form an alternating ring which encloses part of the gamma chain. CF(1) is attached to CF(0) by a central stalk formed by the gamma and epsilon chains, while a peripheral stalk is formed by the delta and b chains.

Its subcellular location is the cell inner membrane. It carries out the reaction ATP + H2O + 4 H(+)(in) = ADP + phosphate + 5 H(+)(out). Its function is as follows. Produces ATP from ADP in the presence of a proton gradient across the membrane. The alpha chain is a regulatory subunit. The protein is ATP synthase subunit alpha of Thermodesulfovibrio yellowstonii (strain ATCC 51303 / DSM 11347 / YP87).